The chain runs to 121 residues: Small ribosomal subunit protein bS6 (121 aa).

The disordered stretch occupies residues methionine 102–alanine 121. The span at asparagine 105–glutamine 115 shows a compositional bias: basic and acidic residues.

The protein belongs to the bacterial ribosomal protein bS6 family.

Binds together with bS18 to 16S ribosomal RNA. This is Small ribosomal subunit protein bS6 from Polaromonas sp. (strain JS666 / ATCC BAA-500).